Here is a 350-residue protein sequence, read N- to C-terminus: Deoxyribonuclease-2-alpha (350 aa).

Positions 1–19 are cleaved as a signal peptide; the sequence is MAAPSSLLLAALLWVPAEA. Cysteines 22 and 162 form a disulfide. Residues N89, N215, N269, and N293 are each glycosylated (N-linked (GlcNAc...) asparagine). 2 cysteine pairs are disulfide-bonded: C270–C350 and C311–C330. Residue H298 is part of the active site.

This sequence belongs to the DNase II family. As to expression, ubiquitous.

The protein localises to the lysosome. The catalysed reaction is Endonucleolytic cleavage to nucleoside 3'-phosphates and 3'-phosphooligonucleotide end-products.. Functionally, hydrolyzes DNA under acidic conditions with a preference for double-stranded DNA. Plays a major role in the clearance of nucleic acids generated through apoptosis, hence preventing autoinflammation. Necessary for proper fetal development and for definitive erythropoiesis in fetal liver and bone marrow, where it degrades nuclear DNA expelled from erythroid precursor cells. The protein is Deoxyribonuclease-2-alpha (Dnase2) of Rattus norvegicus (Rat).